A 1192-amino-acid polypeptide reads, in one-letter code: Protein WWC2 (1192 aa).

WW domains follow at residues 10–43 and 57–90; these read LPLP…DPRD and DELP…DPRK. 2 coiled-coil regions span residues 121–194 and 224–256; these read KEQR…YKEQ and ELKS…FHLD. Residue Ser286 is modified to Phosphoserine. Residues 302-421 adopt a coiled-coil conformation; sequence LAEKVRLSLQ…KLEETTKLTT (120 aa). A disordered region spans residues 441-462; the sequence is SSLGSLASSRGSLNTSSRGSLN. One can recognise a C2 domain in the interval 698–821; that stretch reads ETAQVQIGLR…FSSEVFTLWY (124 aa). A coiled-coil region spans residues 859–887; the sequence is ALLARTSAELLAVEQELAQEEEEESGQEE. Disordered regions lie at residues 873–895 and 911–991; these read QELA…DGDW and EAEV…SRQH. The segment covering 875–885 has biased composition (acidic residues); sequence LAQEEEEESGQ. Over residues 923-933 the composition is skewed to polar residues; that stretch reads TEDLSSCTSVP. Residues 938-951 show a composition bias toward basic and acidic residues; that stretch reads DGNRKESNCAKDLR. Residue Thr1004 is modified to Phosphothreonine. Ser1022 carries the phosphoserine modification. Positions 1031–1050 are interaction with PRKCZ; sequence SLFVRNSTERRSLRVKRTVC. Positions 1068 to 1144 form a coiled coil; it reads DLELDLQASL…EQKQGLNAEK (77 aa). Residues 1124-1137 show a composition bias toward basic and acidic residues; the sequence is QAEKQAEQSKEEQK. Residues 1124-1143 form a disordered region; it reads QAEKQAEQSKEEQKQGLNAE.

The protein belongs to the WWC family. As to quaternary structure, forms homodimers and heterodimers with WWC1 and WWC3. Interacts with DLC1 and PRKCZ. Interacts (via WW domains) with LATS1 and LATS2.

The protein localises to the cytoplasm. Its subcellular location is the cytosol. Its function is as follows. Regulator of the Hippo signaling pathway, also known as the Salvador-Warts-Hippo (SWH) pathway. Enhances phosphorylation of LATS1 and YAP1 and negatively regulates cell proliferation and organ growth due to a suppression of the transcriptional activity of YAP1, the major effector of the Hippo pathway. The polypeptide is Protein WWC2 (Homo sapiens (Human)).